We begin with the raw amino-acid sequence, 246 residues long: Complement C1q tumor necrosis factor-related protein 3 (246 aa).

The first 22 residues, 1–22 (MLWRQLIYWQLLALFFLPFCLC), serve as a signal peptide directing secretion. Residues 51 to 113 (GYQGPPGPPG…KGEKGYPGIP (63 aa)) form the Collagen-like domain. The tract at residues 53-110 (QGPPGPPGPPGIPGNHGNNGNNGATGHEGAKGEKGDKGDLGPRGERGQHGPKGEKGYP) is disordered. A compositionally biased stretch (pro residues) spans 55-64 (PPGPPGPPGI). Low complexity predominate over residues 65–74 (PGNHGNNGNN). A glycan (N-linked (GlcNAc...) asparagine) is linked at asparagine 70. The segment covering 80-107 (EGAKGEKGDKGDLGPRGERGQHGPKGEK) has biased composition (basic and acidic residues). The C1q domain occupies 113-246 (PPELQIAFMA…FAGFLLFETK (134 aa)).

Glycosylated on Asn-70. As to expression, expressed in colon and small intestine.

The protein localises to the secreted. This Homo sapiens (Human) protein is Complement C1q tumor necrosis factor-related protein 3 (C1QTNF3).